The primary structure comprises 460 residues: ATP synthase subunit beta (460 aa).

150–157 (GGAGVGKT) contributes to the ATP binding site.

The protein belongs to the ATPase alpha/beta chains family. As to quaternary structure, F-type ATPases have 2 components, CF(1) - the catalytic core - and CF(0) - the membrane proton channel. CF(1) has five subunits: alpha(3), beta(3), gamma(1), delta(1), epsilon(1). CF(0) has three main subunits: a(1), b(2) and c(9-12). The alpha and beta chains form an alternating ring which encloses part of the gamma chain. CF(1) is attached to CF(0) by a central stalk formed by the gamma and epsilon chains, while a peripheral stalk is formed by the delta and b chains.

The protein resides in the cell inner membrane. It carries out the reaction ATP + H2O + 4 H(+)(in) = ADP + phosphate + 5 H(+)(out). Produces ATP from ADP in the presence of a proton gradient across the membrane. The catalytic sites are hosted primarily by the beta subunits. The chain is ATP synthase subunit beta from Pectobacterium carotovorum subsp. carotovorum (strain PC1).